The following is a 331-amino-acid chain: Myc-associated zinc finger protein (331 aa).

Disordered stretches follow at residues 46–65 (AQSP…APAA) and 108–131 (TVDT…SAPA). The span at 117–127 (PPAPPPPPPAV) shows a compositional bias: pro residues. 4 consecutive C2H2-type zinc fingers follow at residues 177–199 (YICA…EAIH), 266–288 (HACE…KLSH), 294–316 (YQCP…VRSH), and 324–331 (YNCSHCGK).

In terms of assembly, interacts with BPTF. Ubiquitously expressed.

The protein localises to the nucleus. Functionally, transcriptional regulator. Acts as a transcriptional activator that binds to purine-rich GAGA sites found in the promoter of many genes including insulin I and II and islet amyloid polypeptide. This chain is Myc-associated zinc finger protein (MAZ), found in Mesocricetus auratus (Golden hamster).